The sequence spans 4691 residues: Plectin (4691 aa).

Residues 1–1478 (MVAGMLMPLD…SELTTLTSQY (1478 aa)) form a globular 1 region. Residue Arg-21 is modified to Phosphoserine. Val-26 bears the Phosphotyrosine mark. Disordered stretches follow at residues 113–161 (RSPH…TPVV) and 167–186 (GTLA…RDRV). Residues 137 to 154 (DPAREERQVYRRKEREEG) are compositionally biased toward basic and acidic residues. The tract at residues 181–411 (DERDRVQKKT…YVSSLYDAMP (231 aa)) is actin-binding. 2 Calponin-homology (CH) domains span residues 185–293 (RVQK…LHFQ) and 306–411 (MTAK…DAMP). The Spectrin 1 repeat unit spans residues 653–727 (LQSTQRRPEL…ERARNDESQL (75 aa)). The residue at position 728 (Ser-728) is a Phosphoserine. Spectrin repeat units lie at residues 748–832 (KLLN…REDH) and 845–938 (LQTQ…AIVQ). At Thr-823 the chain carries Phosphothreonine. The region spanning 949 to 1006 (RGHVPLIAVCDYKQVEVTVHKGDQCQLVGPAQPSHWKVLSGSSSEAAVPSVCFLVPPP) is the SH3 domain. The required for interaction with intermediate filament proteins stretch occupies residues 963-4572 (VEVTVHKGDQ…ARTAQKLRDV (3610 aa)). The residue at position 1055 (Ser-1055) is a Phosphoserine. One copy of the Spectrin 4 repeat lies at 1323–1423 (RERVTQLLER…QKFAKQYINA (101 aa)). Residue Ser-1443 is modified to Phosphoserine. Coiled-coil stretches lie at residues 1477–1697 (QYIK…ERRL) and 1729–2764 (SFAE…TTQA). The interval 1479–2762 (IKFISETLRR…ALAHSEIATT (1284 aa)) is central fibrous rod domain. Positions 1626–1653 (RAEEAEAQKRQAQEEAERLRRQVQDESQ) are disordered. Ser-1729 carries the post-translational modification Phosphoserine. Lys-1733 carries the N6-acetyllysine modification. Disordered regions lie at residues 1801–1835 (SLAQ…RELA), 2100–2141 (AEDT…SLAA), and 2223–2317 (RLRS…KHKK). 4 stretches are compositionally biased toward basic and acidic residues: residues 1806–1835 (DAEK…RELA), 2100–2116 (AEDT…EAAR), 2124–2136 (EEQR…ERVQ), and 2223–2266 (RLRS…KQSA). Residues 2267–2280 (EEQAQAQAQAQAAA) are compositionally biased toward low complexity. A compositionally biased stretch (basic and acidic residues) spans 2281 to 2296 (EKLRKEAEQEAARRAQ). Position 2639 is a phosphoserine (Ser-2639). Lys-2644 carries the N6-acetyllysine modification. Residues 2675–2728 (LREEQQRQQQQMEQEKQELMASMEEARRRQREAEEGVRRKQEELQHLEQQRQQQ) form a disordered region. Over residues 2687 to 2728 (EQEKQELMASMEEARRRQREAEEGVRRKQEELQHLEQQRQQQ) the composition is skewed to basic and acidic residues. Positions 2763-4691 (QAASTKALPN…SLGGPESAVA (1929 aa)) are globular 2. Ser-2781 carries the post-translational modification Phosphoserine. Phosphotyrosine is present on Tyr-2788. Plectin repeat units follow at residues 2795 to 2832 (QKVP…REDV), 2833 to 2870 (YRYL…PGTA), 2871 to 2908 (LILL…PELH), 2909 to 2946 (HKLL…RDHG), 2947 to 2984 (VRLL…EEMN), and 2988 to 3022 (SDPS…PETG). Ser-2809 is subject to Phosphoserine. Phosphothreonine is present on Thr-2893. A Phosphotyrosine modification is found at Tyr-3040. Residues Lys-3060 and Lys-3098 each carry the N6-acetyllysine modification. 6 Plectin repeats span residues 3123–3160 (ALVP…ADSV), 3161–3198 (RQAL…PEVA), 3199–3236 (VALL…PELH), 3237–3274 (EKLL…REQG), 3275–3312 (LRLL…KETN), and 3315–3350 (LTSP…QLTG). The span at 3312–3326 (NRALTSPRDDARVYH) shows a compositional bias: basic and acidic residues. A disordered region spans residues 3312-3338 (NRALTSPRDDARVYHDPSTQEPVTYSQ). Polar residues predominate over residues 3328–3338 (PSTQEPVTYSQ). A Phosphotyrosine modification is found at Tyr-3369. N6-acetyllysine is present on Lys-3427. Plectin repeat units lie at residues 3492 to 3529 (RTLL…PSTA), 3530 to 3567 (TLLL…PELH), 3568 to 3605 (EKLL…RDHA), 3606 to 3643 (IRLL…EEMN), and 3647 to 3681 (ADPS…PETG). Thr-3792 is modified (phosphothreonine). Tyr-3797 carries the post-translational modification Phosphotyrosine. Plectin repeat units lie at residues 3827–3864 (WRYL…AEVA), 3865–3902 (RLLL…PELH), 3903–3940 (DRLL…AEEA), 3941–3978 (LRLL…KDTH), and 3982–4015 (SEPS…DPSG). Residues 3954–4291 (VDPRLGFHLP…KRRVVIVDPE (338 aa)) are required for interaction with type2 keratins, DES and VIM. Thr-4037 bears the Phosphothreonine mark. At Ser-4061 the chain carries Phosphoserine. 6 Plectin repeats span residues 4070 to 4107 (QKFL…PGTA), 4108 to 4145 (FELL…PEFK), 4146 to 4183 (DKLL…KDHG), 4184 to 4221 (IRLL…EEMN), 4225 to 4259 (TDPS…PQTG), and 4272 to 4312 (RKTS…HQTY). The tract at residues 4257-4307 (QTGLCLLPLKEKKRERKTSSKSSVRKRRVVIVDPETGKEMSVYEAYRKGLI) is binding to intermediate filaments. Residues 4387–4420 (FRSRSSSVGSSSSYPISSAGPRTQLASWSDPTEE) form a disordered region. Ser-4389, Ser-4391, Ser-4392, Ser-4393, Ser-4396, Ser-4397, Ser-4398, and Ser-4399 each carry phosphoserine. A compositionally biased stretch (low complexity) spans 4389 to 4404 (SRSSSVGSSSSYPISS). Phosphotyrosine is present on Tyr-4400. 2 positions are modified to phosphoserine: Ser-4403 and Ser-4413. The segment covering 4406–4416 (GPRTQLASWSD) has biased composition (polar residues). 5 Plectin repeats span residues 4415–4452 (SDPT…NITG), 4453–4490 (QRLL…KIMV), 4491–4528 (DRIN…YEAG), 4529–4566 (QRFL…ARTA), and 4567–4604 (QKLR…EGTG). Thr-4418 carries the post-translational modification Phosphothreonine. Residues 4503-4572 (FEDPRTKTKM…ARTAQKLRDV (70 aa)) form a required for efficient interaction with KRT5 and KRT14 heterodimers region. Residue Thr-4546 is modified to Phosphothreonine; by CDK1. 2 positions are modified to phosphoserine: Ser-4614 and Ser-4620. Residues 4618-4678 (YYSPYSVSGS…SGYGRRYASG (61 aa)) show a composition bias toward low complexity. Residues 4618–4691 (YYSPYSVSGS…SLGGPESAVA (74 aa)) form a disordered region. Position 4622 is a phosphotyrosine (Tyr-4622). 3 positions are modified to phosphoserine: Ser-4623, Ser-4625, and Ser-4629. Thr-4630 bears the Phosphothreonine mark. The tract at residues 4632–4647 (GSRTGSRTGSRAGSRR) is 4 X 4 AA tandem repeats of G-S-R-X. The residue at position 4633 (Ser-4633) is a Phosphoserine. An omega-N-methylarginine mark is found at Arg-4634 and Arg-4647. Ser-4649 and Ser-4682 each carry phosphoserine.

Belongs to the plakin or cytolinker family. In terms of assembly, homodimer or homotetramer. Interacts (via actin-binding domain) with SYNE3. Interacts (via calponin-homology (CH) 1 domain) with VIM (via rod region). Interacts (via N-terminus) with DST isoform 2 (via N-terminus). Interacts with FER. Interacts with TOR1A. Interacts with ANK3. Identified in complexes that contain VIM, EZR, AHNAK, BFSP1, BFSP2, ANK2, PLEC, PRX and spectrin. As to quaternary structure, interacts with KRT14, heterodimers consisting of KRT8 and KRT18, heterodimers consisting of KRT5 and KRT14, heterodimers consisting of KRT14 and KRT15, and heterodimers consisting of KRT1 and KRT10. Interacts with DES and VIM. In terms of processing, phosphorylated by CDK1; regulates dissociation from intermediate filaments during mitosis. Isoform PLEC-1A is phosphorylated on Ser-21. Isoform PLEC-1A is phosphorylated on Tyr-26. In terms of tissue distribution, detected in eye lens fiber cells (at protein level). Expressed at high levels in lung, brain, small intestine, muscle, heart and skin with lower levels found in kidney, liver, uterus, spleen and salivary gland.

Its subcellular location is the cytoplasm. The protein localises to the cytoskeleton. It localises to the cell junction. The protein resides in the hemidesmosome. It is found in the cell projection. Its subcellular location is the podosome. Interlinks intermediate filaments with microtubules and microfilaments and anchors intermediate filaments to desmosomes or hemidesmosomes. May be involved not only in the cross-linking and stabilization of cytoskeletal intermediate filaments network, but also in the regulation of their dynamics. In Mus musculus (Mouse), this protein is Plectin (Plec).